Here is a 358-residue protein sequence, read N- to C-terminus: Peptide chain release factor 1 (358 aa).

Position 233 is an N5-methylglutamine (Gln-233).

The protein belongs to the prokaryotic/mitochondrial release factor family. Post-translationally, methylated by PrmC. Methylation increases the termination efficiency of RF1.

It is found in the cytoplasm. Its function is as follows. Peptide chain release factor 1 directs the termination of translation in response to the peptide chain termination codons UAG and UAA. The polypeptide is Peptide chain release factor 1 (Geobacillus kaustophilus (strain HTA426)).